The chain runs to 343 residues: Ribonucleoside-diphosphate reductase small subunit (343 aa).

Aspartate 101, glutamate 131, and histidine 134 together coordinate Fe cation. Tyrosine 138 is an active-site residue. Residues isoleucine 188–leucine 208 form a helical membrane-spanning segment. Glutamate 194, glutamate 228, and histidine 231 together coordinate Fe cation.

Belongs to the ribonucleoside diphosphate reductase small chain family. In terms of assembly, heterotetramer composed of a homodimer of the large subunit (R1) and a homodimer of the small subunit (R2). Larger multisubunit protein complex are also active, composed of (R1)n(R2)n. It depends on Fe cation as a cofactor.

It is found in the host membrane. The enzyme catalyses a 2'-deoxyribonucleoside 5'-diphosphate + [thioredoxin]-disulfide + H2O = a ribonucleoside 5'-diphosphate + [thioredoxin]-dithiol. Ribonucleoside-diphosphate reductase holoenzyme provides the precursors necessary for viral DNA synthesis. Allows virus growth in non-dividing cells, as well as reactivation from latency in infected hosts. Catalyzes the biosynthesis of deoxyribonucleotides from the corresponding ribonucleotides. This is Ribonucleoside-diphosphate reductase small subunit from Gallid herpesvirus 2 (strain Chicken/Md5/ATCC VR-987) (GaHV-2).